The sequence spans 135 residues: Large ribosomal subunit protein mL61 (135 aa).

A compositionally biased stretch (basic and acidic residues) spans 114-129 (HHESSPENIKEAHKQD). Positions 114–135 (HHESSPENIKEAHKQDYSPPSN) are disordered.

The protein belongs to the mitochondrion-specific ribosomal protein mL61 family. Component of the mitochondrial large ribosomal subunit (mt-LSU). Mature yeast 74S mitochondrial ribosomes consist of a small (37S) and a large (54S) subunit. The 37S small subunit contains a 15S ribosomal RNA (15S mt-rRNA) and at least 32 different proteins. The 54S large subunit contains a 21S rRNA (21S mt-rRNA) and at least 45 different proteins.

The protein localises to the mitochondrion. In terms of biological role, component of the mitochondrial ribosome (mitoribosome), a dedicated translation machinery responsible for the synthesis of mitochondrial genome-encoded proteins, including at least some of the essential transmembrane subunits of the mitochondrial respiratory chain. The mitoribosomes are attached to the mitochondrial inner membrane and translation products are cotranslationally integrated into the membrane. mL61 is not essential in cells grown at 30 degrees Celsius but is required for mitochondrial translation in cells grown at 18 degrees Celsius. The chain is Large ribosomal subunit protein mL61 (mrp49) from Schizosaccharomyces pombe (strain 972 / ATCC 24843) (Fission yeast).